A 57-amino-acid polypeptide reads, in one-letter code: Probable mRNA interferase HicA 1 (57 aa).

Belongs to the HicA mRNA interferase family. Probably forms a complex with the cognate antitoxin HicB 1 which inhibits the mRNA interferase activity.

Toxic component of a type II toxin-antitoxin (TA) system. A probable translation-independent mRNA interferase. This is Probable mRNA interferase HicA 1 (hicA1) from Photorhabdus laumondii subsp. laumondii (strain DSM 15139 / CIP 105565 / TT01) (Photorhabdus luminescens subsp. laumondii).